Consider the following 180-residue polypeptide: Adenine phosphoribosyltransferase (180 aa).

At Ser-2 the chain carries N-acetylserine. 3 positions are modified to phosphoserine: Ser-4, Ser-15, and Ser-30. Position 60 is a phosphotyrosine (Tyr-60). Ser-66 is modified (phosphoserine). Position 114 is an N6-acetyllysine (Lys-114). Residue Thr-135 is modified to Phosphothreonine.

This sequence belongs to the purine/pyrimidine phosphoribosyltransferase family. Homodimer.

The protein resides in the cytoplasm. The enzyme catalyses AMP + diphosphate = 5-phospho-alpha-D-ribose 1-diphosphate + adenine. The protein operates within purine metabolism; AMP biosynthesis via salvage pathway; AMP from adenine: step 1/1. Catalyzes a salvage reaction resulting in the formation of AMP, that is energically less costly than de novo synthesis. The sequence is that of Adenine phosphoribosyltransferase from Rattus norvegicus (Rat).